Reading from the N-terminus, the 306-residue chain is D-alanine--D-alanine ligase (306 aa).

An ATP-grasp domain is found at 107–303 (KHLFKSAGLS…FEQLVVRILE (197 aa)). 134-189 (IMQQFKKVMVKPSHEGSSIGMAQASTPQELEDALSNAFKFDSQVLVEQWISGREFT) contributes to the ATP binding site. Positions 257, 270, and 272 each coordinate Mg(2+).

This sequence belongs to the D-alanine--D-alanine ligase family. It depends on Mg(2+) as a cofactor. Mn(2+) serves as cofactor.

It is found in the cytoplasm. It carries out the reaction 2 D-alanine + ATP = D-alanyl-D-alanine + ADP + phosphate + H(+). The protein operates within cell wall biogenesis; peptidoglycan biosynthesis. Cell wall formation. The polypeptide is D-alanine--D-alanine ligase (Pseudoalteromonas translucida (strain TAC 125)).